Consider the following 205-residue polypeptide: Large ribosomal subunit protein uL4 (205 aa).

Positions 43–95 (RSGNRAQKDRAEVKHSTKKPWRQKGTGRARAGMTSSPLWRGGGRAFPNSPEEN) are disordered. Positions 48 to 57 (AQKDRAEVKH) are enriched in basic and acidic residues. A compositionally biased stretch (basic residues) spans 58-69 (STKKPWRQKGTG).

Belongs to the universal ribosomal protein uL4 family. As to quaternary structure, part of the 50S ribosomal subunit.

Functionally, one of the primary rRNA binding proteins, this protein initially binds near the 5'-end of the 23S rRNA. It is important during the early stages of 50S assembly. It makes multiple contacts with different domains of the 23S rRNA in the assembled 50S subunit and ribosome. Forms part of the polypeptide exit tunnel. The sequence is that of Large ribosomal subunit protein uL4 from Bordetella bronchiseptica (strain ATCC BAA-588 / NCTC 13252 / RB50) (Alcaligenes bronchisepticus).